A 316-amino-acid chain; its full sequence is Thioredoxin reductase (316 aa).

An FAD-binding site is contributed by 36–43; sequence ERGIPGGQ. The cysteines at positions 135 and 138 are disulfide-linked. 278–287 contacts FAD; it reads DIREKSLRQI.

Belongs to the class-II pyridine nucleotide-disulfide oxidoreductase family. As to quaternary structure, homodimer. Requires FAD as cofactor.

It is found in the cytoplasm. The catalysed reaction is [thioredoxin]-dithiol + NADP(+) = [thioredoxin]-disulfide + NADPH + H(+). The chain is Thioredoxin reductase (trxB) from Bacillus subtilis (strain 168).